The following is a 376-amino-acid chain: Alpha-2,8-sialyltransferase 8E (376 aa).

Topologically, residues 1 to 17 (MRYADPSANRDLLGSRT) are cytoplasmic. Residues 18–38 (LLFIFICAFALVTLLQQILYG) traverse the membrane as a helical; Signal-anchor for type II membrane protein segment. Topologically, residues 39–376 (RNYIKRYFEF…RVHTGTCSCC (338 aa)) are lumenal. 2 N-linked (GlcNAc...) asparagine glycosylation sites follow: asparagine 56 and asparagine 96. 2 disulfides stabilise this stretch: cysteine 164-cysteine 313 and cysteine 178-cysteine 373. Residues asparagine 192 and 214-216 (NPS) contribute to the substrate site. Asparagine 241 and asparagine 284 each carry an N-linked (GlcNAc...) asparagine glycan. Residue 300 to 302 (STG) coordinates substrate. Catalysis depends on histidine 348, which acts as the Proton donor/acceptor.

Belongs to the glycosyltransferase 29 family. As to expression, expressed in fetal and adult brain, adult heart and skeletal muscle. Expressed in fetal and adult brain, not detected in adult heart and skeletal muscle.

The protein localises to the golgi apparatus membrane. It carries out the reaction a ganglioside GT1b (d18:1(4E)) + CMP-N-acetyl-beta-neuraminate = a ganglioside GQ1b (d18:1(4E)) + CMP + H(+). The catalysed reaction is a ganglioside GD3 (d18:1(4E)) + CMP-N-acetyl-beta-neuraminate = a ganglioside GT3 (d18:1(4E)) + CMP + H(+). It catalyses the reaction a ganglioside GD1a (d18:1(4E)) + CMP-N-acetyl-beta-neuraminate = a ganglioside GT1a (d18:1(4E)) + CMP + H(+). The enzyme catalyses a ganglioside GM1b (d18:1(4E)) + CMP-N-acetyl-beta-neuraminate = a ganglioside GD1c (d18:1(4E)) + CMP + H(+). It carries out the reaction a ganglioside GQ1c (d18:1(4E)) + CMP-N-acetyl-beta-neuraminate = a ganglioside GP1c (d18:1(4E)) + CMP + H(+). It functions in the pathway protein modification; protein glycosylation. Its function is as follows. Involved in the synthesis of gangliosides GD1c, GT1a, GQ1b, GP1c and GT3 from GD1a, GT1b, GM1b and GD3 respectively. This is Alpha-2,8-sialyltransferase 8E from Homo sapiens (Human).